A 309-amino-acid polypeptide reads, in one-letter code: Aspartate carbamoyltransferase catalytic subunit (309 aa).

Carbamoyl phosphate contacts are provided by Arg55 and Thr56. Lys85 is an L-aspartate binding site. Positions 106, 135, and 138 each coordinate carbamoyl phosphate. Residues Arg168 and Arg230 each contribute to the L-aspartate site. Positions 268 and 269 each coordinate carbamoyl phosphate.

Belongs to the aspartate/ornithine carbamoyltransferase superfamily. ATCase family. Heterododecamer (2C3:3R2) of six catalytic PyrB chains organized as two trimers (C3), and six regulatory PyrI chains organized as three dimers (R2).

It carries out the reaction carbamoyl phosphate + L-aspartate = N-carbamoyl-L-aspartate + phosphate + H(+). The protein operates within pyrimidine metabolism; UMP biosynthesis via de novo pathway; (S)-dihydroorotate from bicarbonate: step 2/3. Functionally, catalyzes the condensation of carbamoyl phosphate and aspartate to form carbamoyl aspartate and inorganic phosphate, the committed step in the de novo pyrimidine nucleotide biosynthesis pathway. This chain is Aspartate carbamoyltransferase catalytic subunit, found in Vibrio vulnificus (strain CMCP6).